A 138-amino-acid chain; its full sequence is MDLVRFSISIPAELLEKFDRIIEEIGYENRSEAIRDLIRDFIIRREWEVGNEEVAGTITIVYNHDEGDVVKELLDLQHEYLDEIISTLHVHMDEHNCLEVIVVKGKAKRIKMIASRLMSLKGVKHGKLVMTSTGKELL.

Ni(2+)-binding residues include His-78, His-89, His-91, and Cys-97.

The protein belongs to the transcriptional regulatory CopG/NikR family. The cofactor is Ni(2+).

In terms of biological role, transcriptional regulator. This chain is Putative nickel-responsive regulator, found in Pyrococcus abyssi (strain GE5 / Orsay).